The chain runs to 2439 residues: Protein roller-3 (2439 aa).

The N-terminal stretch at Met-1–Ala-26 is a signal peptide. Residues Ala-27–Tyr-1851 lie on the Extracellular side of the membrane. Residues Asn-64, Asn-182, Asn-334, Asn-394, Asn-496, Asn-533, Asn-657, Asn-766, Asn-868, Asn-1003, Asn-1036, Asn-1090, and Asn-1261 are each glycosylated (N-linked (GlcNAc...) asparagine). The region spanning Lys-618–Leu-720 is the Fibronectin type-III 1 domain. Fibronectin type-III domains are found at residues Ser-1403–Gly-1503, Ala-1507–Val-1628, Pro-1629–Ala-1732, and Val-1738–Glu-1843. N-linked (GlcNAc...) asparagine glycans are attached at residues Asn-1567, Asn-1636, Asn-1677, and Asn-1779. Residues Phe-1852–Leu-1872 form a helical membrane-spanning segment. Residues Lys-1873 to Val-2439 lie on the Cytoplasmic side of the membrane. One can recognise a Protein kinase domain in the interval Val-1928–Cys-2199. ATP-binding positions include Ile-1934 to Val-1942 and Lys-1963. Disordered regions lie at residues Asn-2214–Thr-2277, Ser-2315–Asn-2348, and His-2412–Val-2439. Polar residues-rich tracts occupy residues Gly-2216–Glu-2233, Ala-2334–Thr-2347, and Pro-2420–Val-2439.

Its subcellular location is the membrane. In terms of biological role, involved in larval development and locomotion. This is Protein roller-3 from Caenorhabditis briggsae.